Reading from the N-terminus, the 457-residue chain is Multidrug resistance protein MdtK (457 aa).

The next 12 membrane-spanning stretches (helical) occupy residues 11–31 (LLAL…MGFV), 53–73 (IWLP…PVIA), 93–113 (WLAG…GYII), 127–147 (AVGY…FQVA), 160–180 (GMVM…IFIY), 188–208 (LGGI…FIAM), 243–263 (LPIA…ALLV), 276–296 (IALN…AAVT), 314–334 (AART…IFTV), 350–370 (VVAL…SDSI), 387–407 (IFFI…YILA), and 418–438 (PAGF…LMML).

The protein belongs to the multi antimicrobial extrusion (MATE) (TC 2.A.66.1) family. MdtK subfamily.

It is found in the cell inner membrane. Its function is as follows. Multidrug efflux pump that functions probably as a Na(+)/drug antiporter. In Salmonella heidelberg (strain SL476), this protein is Multidrug resistance protein MdtK.